The chain runs to 167 residues: Cytochrome c-type biogenesis protein CcmE (167 aa).

Residues 1-7 (MTRKTRR) are Cytoplasmic-facing. The helical; Signal-anchor for type II membrane protein transmembrane segment at 8–28 (LWIVIACLACVGSAAALTLRA) threads the bilayer. Residues 29-167 (FSSNIVFFMA…DTMTAKKAGG (139 aa)) lie on the Periplasmic side of the membrane. 2 residues coordinate heme: His125 and Tyr129. Positions 141 to 150 (TGKWDPRFGK) are enriched in basic and acidic residues. The disordered stretch occupies residues 141-167 (TGKWDPRFGKAPDASSWDTMTAKKAGG).

The protein belongs to the CcmE/CycJ family.

It is found in the cell inner membrane. Functionally, heme chaperone required for the biogenesis of c-type cytochromes. Transiently binds heme delivered by CcmC and transfers the heme to apo-cytochromes in a process facilitated by CcmF and CcmH. The chain is Cytochrome c-type biogenesis protein CcmE from Gluconobacter oxydans (strain 621H) (Gluconobacter suboxydans).